A 628-amino-acid polypeptide reads, in one-letter code: DNA-directed RNA polymerase subunit beta' (628 aa).

Zn(2+) contacts are provided by C70, C72, C85, and C88. Residues D472, D474, and D476 each coordinate Mg(2+).

It belongs to the RNA polymerase beta' chain family. RpoC1 subfamily. In terms of assembly, in plastids the minimal PEP RNA polymerase catalytic core is composed of four subunits: alpha, beta, beta', and beta''. When a (nuclear-encoded) sigma factor is associated with the core the holoenzyme is formed, which can initiate transcription. The cofactor is Mg(2+). Requires Zn(2+) as cofactor.

It localises to the plastid. The protein resides in the chloroplast. It carries out the reaction RNA(n) + a ribonucleoside 5'-triphosphate = RNA(n+1) + diphosphate. Functionally, DNA-dependent RNA polymerase catalyzes the transcription of DNA into RNA using the four ribonucleoside triphosphates as substrates. In Gracilaria tenuistipitata var. liui (Red alga), this protein is DNA-directed RNA polymerase subunit beta'.